Consider the following 313-residue polypeptide: NAD-capped RNA hydrolase NudC (313 aa).

Arg111 contacts substrate. The region spanning 168–293 (PRIDPAVICL…DWSSASESKL (126 aa)) is the Nudix hydrolase domain. Positions 202, 218, and 222 each coordinate a divalent metal cation. The Nudix box signature appears at 203–224 (GFVEAGESFEVCVAREIREEIG). 236–243 (QPWPFPRS) serves as a coordination point for substrate. Residue Glu264 participates in a divalent metal cation binding.

Belongs to the Nudix hydrolase family. NudC subfamily. In terms of assembly, homodimer. The cofactor is Mg(2+). Requires Mn(2+) as cofactor.

The catalysed reaction is a 5'-end NAD(+)-phospho-ribonucleoside in mRNA + H2O = a 5'-end phospho-adenosine-phospho-ribonucleoside in mRNA + beta-nicotinamide D-ribonucleotide + 2 H(+). It carries out the reaction NAD(+) + H2O = beta-nicotinamide D-ribonucleotide + AMP + 2 H(+). It catalyses the reaction NADH + H2O = reduced beta-nicotinamide D-ribonucleotide + AMP + 2 H(+). In terms of biological role, mRNA decapping enzyme that specifically removes the nicotinamide adenine dinucleotide (NAD) cap from a subset of mRNAs by hydrolyzing the diphosphate linkage to produce nicotinamide mononucleotide (NMN) and 5' monophosphate mRNA. The NAD-cap is present at the 5'-end of some mRNAs and stabilizes RNA against 5'-processing. Has preference for mRNAs with a 5'-end purine. Catalyzes the hydrolysis of a broad range of dinucleotide pyrophosphates. This is NAD-capped RNA hydrolase NudC from Mycobacterium bovis (strain ATCC BAA-935 / AF2122/97).